Here is a 1409-residue protein sequence, read N- to C-terminus: DNA-directed RNA polymerase subunit beta' (1409 aa).

Residues Cys70, Cys72, Cys85, and Cys88 each contribute to the Zn(2+) site. Positions 458, 460, and 462 each coordinate Mg(2+). The Zn(2+) site is built by Cys813, Cys887, Cys894, and Cys897.

The protein belongs to the RNA polymerase beta' chain family. The RNAP catalytic core consists of 2 alpha, 1 beta, 1 beta' and 1 omega subunit. When a sigma factor is associated with the core the holoenzyme is formed, which can initiate transcription. Mg(2+) is required as a cofactor. Zn(2+) serves as cofactor.

It catalyses the reaction RNA(n) + a ribonucleoside 5'-triphosphate = RNA(n+1) + diphosphate. DNA-dependent RNA polymerase catalyzes the transcription of DNA into RNA using the four ribonucleoside triphosphates as substrates. The sequence is that of DNA-directed RNA polymerase subunit beta' from Delftia acidovorans (strain DSM 14801 / SPH-1).